A 352-amino-acid polypeptide reads, in one-letter code: Neuronal growth regulator 1 (352 aa).

An N-terminal signal peptide occupies residues 1–35 (MVPLVRGAGGSHQWLAAVLLGLCCLLPAGRLAAPG). Ig-like C2-type domains follow at residues 36–132 (GDFP…VHLT), 137–219 (PKIF…KVTV), and 223–311 (PTIQ…LPLN). An intrachain disulfide couples Cys-58 to Cys-116. Residues Asn-71 and Asn-153 are each glycosylated (N-linked (GlcNAc...) asparagine). Cystine bridges form between Cys-158-Cys-201 and Cys-243-Cys-295. 4 N-linked (GlcNAc...) asparagine glycosylation sites follow: Asn-273, Asn-284, Asn-292, and Asn-305. Residue Gly-322 is the site of GPI-anchor amidated glycine attachment. A propeptide spans 323-352 (DAEVLFSCWYLVLTLSSLTSIFYLKNIILH) (removed in mature form).

This sequence belongs to the immunoglobulin superfamily. IgLON family. Interacts with CEPU-1 and LAMP. In terms of processing, glycosylated. In terms of tissue distribution, expressed in embryonic retina, telencephalon, tectum, cerebellum and diencephalon (at protein level).

It is found in the cell membrane. Its function is as follows. May be involved in cell-adhesion. May participate in the regulation of neurite outgrowth in the developing brain. This is Neuronal growth regulator 1 (NEGR1) from Gallus gallus (Chicken).